The chain runs to 85 residues: SPbeta prophage-derived uncharacterized protein YoqG (85 aa).

This Bacillus subtilis (strain 168) protein is SPbeta prophage-derived uncharacterized protein YoqG (yoqG).